An 89-amino-acid chain; its full sequence is Small ribosomal subunit protein bS20 (89 aa).

Residues 1–12 (MANHKSAIKRHR) are compositionally biased toward basic residues. Positions 1–26 (MANHKSAIKRHRQSVERAGRNRAART) are disordered.

Belongs to the bacterial ribosomal protein bS20 family.

Binds directly to 16S ribosomal RNA. This chain is Small ribosomal subunit protein bS20, found in Desulfovibrio desulfuricans (strain ATCC 27774 / DSM 6949 / MB).